The following is a 175-amino-acid chain: Large ribosomal subunit protein uL10 (175 aa).

The protein belongs to the universal ribosomal protein uL10 family. In terms of assembly, part of the ribosomal stalk of the 50S ribosomal subunit. The N-terminus interacts with L11 and the large rRNA to form the base of the stalk. The C-terminus forms an elongated spine to which L12 dimers bind in a sequential fashion forming a multimeric L10(L12)X complex.

In terms of biological role, forms part of the ribosomal stalk, playing a central role in the interaction of the ribosome with GTP-bound translation factors. The protein is Large ribosomal subunit protein uL10 of Thermobifida fusca (strain YX).